The primary structure comprises 155 residues: 2-C-methyl-D-erythritol 2,4-cyclodiphosphate synthase (155 aa).

A divalent metal cation-binding residues include aspartate 8 and histidine 10. 4-CDP-2-C-methyl-D-erythritol 2-phosphate is bound by residues 8–10 and 34–35; these read DVH and HS. Histidine 42 lines the a divalent metal cation pocket. 4-CDP-2-C-methyl-D-erythritol 2-phosphate is bound by residues 56 to 58, 61 to 65, 100 to 106, 132 to 135, phenylalanine 139, and lysine 142; these read DIG, FPDSD, AQKPKML, and TTEE.

The protein belongs to the IspF family. As to quaternary structure, homotrimer. Requires a divalent metal cation as cofactor.

The catalysed reaction is 4-CDP-2-C-methyl-D-erythritol 2-phosphate = 2-C-methyl-D-erythritol 2,4-cyclic diphosphate + CMP. Its pathway is isoprenoid biosynthesis; isopentenyl diphosphate biosynthesis via DXP pathway; isopentenyl diphosphate from 1-deoxy-D-xylulose 5-phosphate: step 4/6. In terms of biological role, involved in the biosynthesis of isopentenyl diphosphate (IPP) and dimethylallyl diphosphate (DMAPP), two major building blocks of isoprenoid compounds. Catalyzes the conversion of 4-diphosphocytidyl-2-C-methyl-D-erythritol 2-phosphate (CDP-ME2P) to 2-C-methyl-D-erythritol 2,4-cyclodiphosphate (ME-CPP) with a corresponding release of cytidine 5-monophosphate (CMP). The sequence is that of 2-C-methyl-D-erythritol 2,4-cyclodiphosphate synthase from Clostridium botulinum (strain ATCC 19397 / Type A).